The chain runs to 259 residues: Ras-related protein Rab-34 (259 aa).

Residue M1 is modified to N-acetylmethionine. The GTP site is built by S62, V63, G64, K65, T66, D78, Y81, and T84. Position 66 (T66) interacts with Mg(2+). A Switch 1 motif is present at residues 71 to 89 (RFCKDTFDKNYKATIGVDF). Mg(2+) is bound by residues T84 and D107. A Switch 2 motif is present at residues 108–127 (TAGQERFKCIASTYYRGAQA). GTP contacts are provided by G110, K167, D169, and S198. S241 carries the phosphoserine modification. Residues C257 and C258 are each lipidated (S-geranylgeranyl cysteine).

Belongs to the small GTPase superfamily. Rab family. Interacts with RILP. The GTP-bound form interacts with REP15. It depends on Mg(2+) as a cofactor.

It is found in the cytoplasm. The protein resides in the golgi apparatus. The protein localises to the cytoplasmic vesicle. Its subcellular location is the phagosome. It localises to the phagosome membrane. It is found in the cell projection. The protein resides in the cilium. The protein localises to the cytoskeleton. Its subcellular location is the microtubule organizing center. It localises to the centrosome. It is found in the centriole. It catalyses the reaction GTP + H2O = GDP + phosphate + H(+). Regulated by guanine nucleotide exchange factors (GEFs) which promote the exchange of bound GDP for free GTP. Regulated by GTPase activating proteins (GAPs) which increase the GTP hydrolysis activity. Inhibited by GDP dissociation inhibitors (GDIs). In terms of biological role, the small GTPases Rab are key regulators of intracellular membrane trafficking, from the formation of transport vesicles to their fusion with membranes. Rabs cycle between an inactive GDP-bound form and an active GTP-bound form that is able to recruit to membranes different sets of downstream effectors directly responsible for vesicle formation, movement, tethering and fusion. RAB34 transports protein involved in the redistribution of lysosomes to the peri-Golgi region. Plays a role in the maturation of phagosomes that engulf pathogens, such as S.aureus and M.tuberculosis. Plays a role in the fusion of phagosomes with lysosomes. Required for the early steps of intracellular ciliogenesis, the cilium assembly pathway initiated by trafficking and docking of ciliary vesicles to the centrioles in the cytoplasm, followed by axoneme formation in the cytoplasm. After axoneme elongation, the centrioles migrate close to the cell surface so that ciliary vesicles can fuse with the plasma membrane to expose cilia to the extracellular space. It seems dispensable for ciliogenesis via the extracellular pathway where cilium assembly begins after migration and docking of the centriole to the plasma membrane. Also acts as a positive regulator of hedgehog signaling and regulates ciliary function. This chain is Ras-related protein Rab-34, found in Mus musculus (Mouse).